Here is a 2026-residue protein sequence, read N- to C-terminus: MASTPSSGSYDLAIVTPTEDHSLRSFSLSQGNVQQTFLVSTQDGAFLDQQKASFLQSYSKDQSILGLVFEFLQFLLDEACPPAPLGAFLGAIESQCVRDANIHDLIVSEPEAKNIIRTYYRAHAVAGLNPRPAPSGLFSTVNIEAHRILMAFGGQGSTNLVCVDELADLYSLYQPLLEPLIASVAPALASLSREPSTLQHYLGREIDLYSWLTIPESRPDRAFTATAAVSFPIIGLLDMAHYYVLGKLLDSDSPKRLRSALQGLTGHSQGIIVAAAVAQADTWASFLAQAQWAIRLLFWMGYECHTAAPASPLSSAAIRDSIEHGEGSPSWLLSVRGLRSPALDALITDCNRRLPESEHLSIGLINTERNIVVAGSPRSLRGLCLRLREIEADDGQDQSRVPFRQRKPVVHHTFLPVSAPFHSSHLRAAADRVKERFPDASSPQVGDLLTAVYHTRTGQDMREMFSPSNNLIHSLVEAVACETVDWPATLQVSRSKPPSHIVLLSSSRLSDLVSEIVDGRGVRIIAGTVLAPTDPAVLGGKAELLTTKPSQAPTPWAELFKARLVAGPDGRPILETRLSQLLQAPPIITAGMTPTTVHWDFVAAVMQAGYHVELAGGGYFDAAGMTTAIEKLAAHVPPGRGITCNLIYASPHSIAFQIPLIRSMIQRGIPIDGLTIGAGVPSQDVVNEWIQTLGIKHLSLKPGSIAAIYEVIEIAKKHPTFPIILQWTGGRGGGHHSCEDFHEPLLQTYRDIRRCSNLYLVVGSGFGQADQMHPYITGEWSLSFGRPVMPCDGILIGSRMMVAREAHTSPQAKELILAAAGVADSEWEQSFKKPTGGVLTVQSEMGQPIHKLATRGVRLWHEMDKTIFSLPRDKRVAALNARKAEIIRRLSADFAKPWFGYNAAGDAVDLEDMTYTEVIARLIRLVYVSHQHRWIDPSYRQLVLDFTYRTLERVSNADYATDKLDLSQPEQFVEQVQQLCPAATTRRLHPDDVRFFLTICKQRGRKPVNFIPALDEDFEYWFKKDSLWQSEDVDSIIDQDADRVCILQGPVAVQYSRRADQSAREILDEIHHGLANHFEEGPSQSDRPSLAISEMVSARVTVTESNTHRIIRPTSESLPSVEDWQAFLASQVTGSVRSAIMAEEVLRGSQRQANPLRRVLEPRTGQSIQIPLDGRDLRLVEDAKNRPLVHIKPSGDQEVAVDFYYYDFVETPGNLRFTYKFDSKSLSLVENLDGRDDRVKLFYAHLWLGRADLSYHRLSEVFEGEEITLSSDLHRHLHNALRHTVPDATASATTNTLPLEAAIIAAWKPLMEPLFVAELQGDLLRLVHLSNSIRYTPGAAPLEVNDVVATKSQVRAVTIKETGKTISVEAQIFRSKTLVATVTSEFFIKGSFSDYETTFSHQDEAAIELKVQSAIDEALLRDREWFLLDDPTQSLIDKTLVFRLHTVTRWKDQSTFTSLKTTGSIYTKHWNGTEQKVGTVASEVVECHGNPVIDFLQRKGTVVQEKVPLKHPGLIDNGSRTIRLPLDNALYSSVSKDYNPIHTSSVFARFADLPGTITHGMYTAAVSRAVTECLAADGETGRLRSFSASFVGMVLPGDQLTVRIRHEAMCHGRMVLSVAAYREGTDEKVLQGEAEVEQRTSAYLFTGQGSQAQNMGMQLYDSSAVARSVWDEVDRRLLDQYGWSILNVVRANPKQITIHFRGARGRRIRDNYLAMRTETRMPDGSTRLEPILRDLTAKSESYTFFDSRGLLYATQFAQPAILLMEKAAFEDMKANGLIQEGAAFAGHSLGEYGVLASLVDFLPFEMMMSVVFYRGLVMQFTMERDSNGHTGFSMVAVSPKRVGKYFDEAMLRIVVDLIHRQSGKLLEIVNFNVEAEQYVCAGHVRNIYILSGILDLLSRSATGPQLVASLRSASDPAITDVAKEIAVYLEKAPQLNNPTELKRGRATIPLQGIDVPFHSSHLRSGVSVYRRFLEERIQAENVQVDRLVGKFIPNVMGKPFAIDRSYLEEAAAVTGSSVLRELALAA.

The segment at 148-526 (ILMAFGGQGS…VDGRGVRIIA (379 aa)) is acetyltransferase (AT) domain. Ser268 functions as the For acetyltransferase activity in the catalytic mechanism. The enoyl reductase (ER) domain stretch occupies residues 579 to 824 (SQLLQAPPII…LILAAAGVAD (246 aa)). The interval 1130–1604 (SQVTGSVRSA…LPGDQLTVRI (475 aa)) is dehydratase (DH) domain. In terms of domain architecture, MaoC-like spans 1512–1625 (PGLIDNGSRT…LSVAAYREGT (114 aa)). The malonyl/palmitoyl transferase (MT/PT) domain stretch occupies residues 1643-2016 (YLFTGQGSQA…LEEAAAVTGS (374 aa)). Ser1788 serves as the catalytic For malonyltransferase activity.

The protein belongs to the fungal fatty acid synthetase subunit beta family. In terms of assembly, [Alpha(6)beta(6)] hexamers of two multifunctional subunits (alpha and beta).

It carries out the reaction acetyl-CoA + n malonyl-CoA + 2n NADPH + 4n H(+) = a long-chain-acyl-CoA + n CoA + n CO2 + 2n NADP(+).. The catalysed reaction is holo-[ACP] + acetyl-CoA = acetyl-[ACP] + CoA. It catalyses the reaction holo-[ACP] + malonyl-CoA = malonyl-[ACP] + CoA. The enzyme catalyses a (3R)-hydroxyacyl-[ACP] = a (2E)-enoyl-[ACP] + H2O. It carries out the reaction a 2,3-saturated acyl-[ACP] + NAD(+) = a (2E)-enoyl-[ACP] + NADH + H(+). The catalysed reaction is (9Z)-octadecenoyl-[ACP] + H2O = (9Z)-octadecenoate + holo-[ACP] + H(+). It participates in secondary metabolite biosynthesis. Functionally, fatty acid synthase beta subunit; part of the gene cluster that mediates the biosynthesis of oryzines, natural products with an unusual maleidride backbone. The two subunits of the fungal fatty acid synthase oryfasA and oryfasB probably form octenoic acid. This fatty acid is most likely activated by the acyl-CoA ligase oryP to give octenyl-CoA before the citrate synthase-like protein oryE catalyzes condensation with oxaloacetate to form tricarboxylic acid. The next steps of the pathways are conjectural, but a favorite possible route has been proposed, beginning with decarboxylation and concomitant dehydration by the decarboxylase oryM, followed by tautomerization, which may lead to the production of a diene intermediate. Reduction of this diene intermediate could give the known metabolite piliformic acid. On the pathway to oryzine B and oryzine A, however, hydroxylation of the diene by the alpha-ketoglutarate-dependent dioxygenase oryG and lactonisation by the lactonohydrolases oryH or oryL could give oryzine B directly. Finally, enoyl reduction by the dehydrogenase oryD would then convert oryzine B into oryzine A. This is Fatty acid synthase subunit beta from Aspergillus oryzae (strain ATCC 42149 / RIB 40) (Yellow koji mold).